Reading from the N-terminus, the 560-residue chain is Serine/threonine-protein kinase TOS3 (560 aa).

The 295-residue stretch at F50 to M344 folds into the Protein kinase domain. ATP contacts are provided by residues L56–V64 and K79. Residue D189 is the Proton acceptor of the active site.

The protein belongs to the protein kinase superfamily. Ser/Thr protein kinase family. Post-translationally, autophosphorylated.

The enzyme catalyses L-seryl-[protein] + ATP = O-phospho-L-seryl-[protein] + ADP + H(+). The catalysed reaction is L-threonyl-[protein] + ATP = O-phospho-L-threonyl-[protein] + ADP + H(+). Its function is as follows. One of the three SNF1 protein kinases (with SAK1 and ELM1) which are required for growth on nonfermentable carbon sources and nonpreferred sugars and for response to environmental stress. Activates SNF1 by phosphorylation of its activation-loop 'Thr-210'. Required for the regulation by SNF1 of the transcription of a large set of genes, the modification the activity of metabolic enzymes, and the control of various nutrient-responsive cellular developmental processes. Also phosphorylates GAL83, MIG1 and SIP2. This is Serine/threonine-protein kinase TOS3 (TOS3) from Saccharomyces cerevisiae (strain YJM789) (Baker's yeast).